The following is a 414-amino-acid chain: Histidine--tRNA ligase (414 aa).

It belongs to the class-II aminoacyl-tRNA synthetase family. In terms of assembly, homodimer.

It is found in the cytoplasm. It catalyses the reaction tRNA(His) + L-histidine + ATP = L-histidyl-tRNA(His) + AMP + diphosphate + H(+). The sequence is that of Histidine--tRNA ligase from Anaeromyxobacter dehalogenans (strain 2CP-1 / ATCC BAA-258).